The following is a 629-amino-acid chain: MFYPEQFDVIIIGGGHAGTEAAMAAARMGRQTLLLTHNIDTLGQMSCNPAIGGIGKGHLVKEIDALGGLMATAIDHAGIQFRILNASKGPAVRATRAQADRVLYRQAVRTALENQPNLMIFQQPVEDLIVENDRVVGAVTQMGLKFRAKAVVLTVGTFLDGKIHIGLENYSGGRAGDPPSISLSQRLRELPLRVNRLKTGTPPRIDARSIDFSVLAPQHGDTPIPVFSFMGNAGQHPEQMACYITYTNEKTHDVIRNNLDRSPMYAGIIEGIGPRYCPSIEDKVMRFADRNAHQIFLEPEGLTSNEIYPNGISTSLPFDVQMQIVRSMEGMQNARIIRPGYAIEYDFFDPRDLKPTLESKFIQGLFFAGQINGTTGYEEAAAQGLLAGLNAGRYANEDEGWSPRRDQAYLGVLVDDLSTLGTKEPYRMFTSRAEYRLMLREDNADLRLTEKGRELGLVDDARWARFSEKLEHIEQERQRLRDIWMHPHAENVEQVNALLKAPLSREANGEELLRRPEMDYTQLTSVAAFAPPLADTQAAEQVEIQVKYEGYIARQQEEIEKQQRNENTVLPLDLDYQQVSGLSNEVIAKLNDHKPNSIGQASRISGITPAAISILLIWLKKQGLLRRSA.

Residues Gly-13–Gly-18, Val-125, and Ser-180 each bind FAD. Gly-273–Phe-287 contacts NAD(+). Gln-370 contacts FAD.

The protein belongs to the MnmG family. In terms of assembly, homodimer. Heterotetramer of two MnmE and two MnmG subunits. FAD serves as cofactor.

Its subcellular location is the cytoplasm. Its function is as follows. NAD-binding protein involved in the addition of a carboxymethylaminomethyl (cmnm) group at the wobble position (U34) of certain tRNAs, forming tRNA-cmnm(5)s(2)U34. The chain is tRNA uridine 5-carboxymethylaminomethyl modification enzyme MnmG from Serratia proteamaculans (strain 568).